The primary structure comprises 494 residues: Peptidyl-prolyl cis-trans isomerase-like 4 (494 aa).

A PPIase cyclophilin-type domain is found at 1–172; it reads MSVLLETSAG…VDIRIKHTVI (172 aa). The segment at 176 to 196 is disordered; sequence PYPDPAGMREPSASPPPSKAQ. Positions 206 to 240 form a coiled coil; the sequence is EELLDVEASEEAAAEAERRRREREAAAQALTLEMM. Residues 253-331 enclose the RRM domain; sequence NVLFVCKLNP…RRIHVDFSQS (79 aa). 2 stretches are compositionally biased toward basic and acidic residues: residues 391–418 and 425–494; these read DLKG…DRST and PRRD…YRRR. Residues 391-494 are disordered; the sequence is DLKGRHDGDK…NRGRDDYRRR (104 aa).

It belongs to the cyclophilin-type PPIase family. PPIL4 subfamily.

It is found in the nucleus. It catalyses the reaction [protein]-peptidylproline (omega=180) = [protein]-peptidylproline (omega=0). Functionally, PPIases accelerate the folding of proteins. It catalyzes the cis-trans isomerization of proline imidic peptide bonds in oligopeptides. In Neurospora crassa (strain ATCC 24698 / 74-OR23-1A / CBS 708.71 / DSM 1257 / FGSC 987), this protein is Peptidyl-prolyl cis-trans isomerase-like 4 (cyp-6).